Here is a 1169-residue protein sequence, read N- to C-terminus: C5a peptidase (1169 aa).

The N-terminal stretch at 1-31 (MRKKQKLPFDKLAIALMSTSILLNAQSDIKA) is a signal peptide. A disordered region spans residues 33-111 (TVTEDTPATE…ETIRDLNDPS (79 aa)). The segment covering 48-67 (PQQTAVSEEAPSSSSKETNP) has biased composition (polar residues). A Peptidase S8 domain is found at 101 to 583 (KETIRDLNDP…AGAVDAKKAS (483 aa)). The span at 102-111 (ETIRDLNDPS) shows a compositional bias: basic and acidic residues. Catalysis depends on charge relay system residues aspartate 132, histidine 195, and serine 514. The tract at residues 1028–1135 (NLLEGHSNKP…RDQLPTTNDK (108 aa)) is disordered. Basic and acidic residues-rich tracts occupy residues 1033-1056 (HSNK…KPEQ), 1063-1073 (PDKKPEAKPEQ), and 1080-1092 (PDKK…EKDS). 4 repeat units span residues 1036–1052 (KPEQ…TPET), 1053–1069 (KPEQ…KPEA), 1070–1086 (KPEQ…KPET), and 1087–1103 (KPEK…TPQK). A 4 X 17 AA tandem repeats region spans residues 1036-1103 (KPEQDGSDQV…GQTPGKTPQK (68 aa)). Over residues 1093–1108 (SGQTPGKTPQKGQPSR) the composition is skewed to polar residues. The LPXTG sorting signal signature appears at 1129 to 1133 (LPTTN). Position 1132 is a pentaglycyl murein peptidoglycan amidated threonine (threonine 1132). Residues 1133 to 1169 (NDKDTNRLHLLKLVMTTFFFGLVAHIFKTKRQKETKK) constitute a propeptide, removed by sortase.

It belongs to the peptidase S8 family. Post-translationally, cleaved by SpeB protease; leading to its degradation. Degradation by SpeB is probably strictly regulated to preserve integrity of C5a peptidase.

It is found in the secreted. The protein resides in the cell wall. It carries out the reaction The primary cleavage site is at 67-His-|-Lys-68 in human C5a with a minor secondary cleavage site at 58-Ala-|-Ser-59.. In terms of biological role, this virulence factor of S.pyogenes specifically cleaves the human serum chemotaxin C5a at '68-Lys-|-Asp-69' bond near its C-terminus, destroying its ability to serve as a chemoattractant. This is C5a peptidase (scpA) from Streptococcus pyogenes serotype M3 (strain ATCC BAA-595 / MGAS315).